We begin with the raw amino-acid sequence, 395 residues long: Elongation factor Tu (395 aa).

The tr-type G domain maps to 10–204 (KPHVNVGTIG…AVDAYIDTPL (195 aa)). The segment at 19 to 26 (GHVDHGKT) is G1. GTP is bound at residue 19-26 (GHVDHGKT). Mg(2+) is bound at residue T26. Positions 60–64 (GITIN) are G2. A G3 region spans residues 81 to 84 (DCPG). GTP-binding positions include 81 to 85 (DCPGH) and 136 to 139 (NKAD). Positions 136 to 139 (NKAD) are G4. The G5 stretch occupies residues 174–176 (SAL).

This sequence belongs to the TRAFAC class translation factor GTPase superfamily. Classic translation factor GTPase family. EF-Tu/EF-1A subfamily. Monomer.

The protein localises to the cytoplasm. It catalyses the reaction GTP + H2O = GDP + phosphate + H(+). GTP hydrolase that promotes the GTP-dependent binding of aminoacyl-tRNA to the A-site of ribosomes during protein biosynthesis. This chain is Elongation factor Tu, found in Acholeplasma laidlawii (strain PG-8A).